We begin with the raw amino-acid sequence, 505 residues long: Histidine ammonia-lyase (505 aa).

Residues Ala-141–Gly-143 constitute a cross-link (5-imidazolinone (Ala-Gly)). A 2,3-didehydroalanine (Ser) modification is found at Ser-142.

The protein belongs to the PAL/histidase family. Post-translationally, contains an active site 4-methylidene-imidazol-5-one (MIO), which is formed autocatalytically by cyclization and dehydration of residues Ala-Ser-Gly.

Its subcellular location is the cytoplasm. It catalyses the reaction L-histidine = trans-urocanate + NH4(+). It participates in amino-acid degradation; L-histidine degradation into L-glutamate; N-formimidoyl-L-glutamate from L-histidine: step 1/3. The chain is Histidine ammonia-lyase from Bacillus cereus (strain ATCC 10987 / NRS 248).